The primary structure comprises 116 residues: Large ribosomal subunit protein bL20 (116 aa).

It belongs to the bacterial ribosomal protein bL20 family.

Binds directly to 23S ribosomal RNA and is necessary for the in vitro assembly process of the 50S ribosomal subunit. It is not involved in the protein synthesizing functions of that subunit. This chain is Large ribosomal subunit protein bL20, found in Picosynechococcus sp. (strain ATCC 27264 / PCC 7002 / PR-6) (Agmenellum quadruplicatum).